We begin with the raw amino-acid sequence, 215 residues long: Urease accessory protein UreE (215 aa).

Residues 134–215 (FDPEGGAYAP…HGHSHKHDHK (82 aa)) are disordered. The span at 164–206 (GHHDHADHEHDHKHDHGKHDHAGHDHAHDHHVHDEHCGHDHGH) shows a compositional bias: basic and acidic residues.

It belongs to the UreE family.

The protein localises to the cytoplasm. Involved in urease metallocenter assembly. Binds nickel. Probably functions as a nickel donor during metallocenter assembly. The protein is Urease accessory protein UreE of Rhodopseudomonas palustris (strain HaA2).